We begin with the raw amino-acid sequence, 593 residues long: NADH-quinone oxidoreductase subunit C/D (593 aa).

An NADH dehydrogenase I subunit C region spans residues 1 to 184 (MTADTAVSIP…DPFSLTLAKQ (184 aa)). Residues 208 to 593 (DYMFLNLGPN…IDFVMADVDR (386 aa)) are NADH dehydrogenase I subunit D.

The protein in the N-terminal section; belongs to the complex I 30 kDa subunit family. This sequence in the C-terminal section; belongs to the complex I 49 kDa subunit family. NDH-1 is composed of 13 different subunits. Subunits NuoB, CD, E, F, and G constitute the peripheral sector of the complex.

It is found in the cell inner membrane. It catalyses the reaction a quinone + NADH + 5 H(+)(in) = a quinol + NAD(+) + 4 H(+)(out). In terms of biological role, NDH-1 shuttles electrons from NADH, via FMN and iron-sulfur (Fe-S) centers, to quinones in the respiratory chain. The immediate electron acceptor for the enzyme in this species is believed to be ubiquinone. Couples the redox reaction to proton translocation (for every two electrons transferred, four hydrogen ions are translocated across the cytoplasmic membrane), and thus conserves the redox energy in a proton gradient. The sequence is that of NADH-quinone oxidoreductase subunit C/D from Ectopseudomonas mendocina (strain ymp) (Pseudomonas mendocina).